Here is a 244-residue protein sequence, read N- to C-terminus: Transcription factor A, mitochondrial (244 aa).

A mitochondrion-targeting transit peptide spans 1-42 (MALFRGMWGVLRTLGRTGVEMCAGCGGRIPSPVSLICIPKCF). The segment at residues 49-117 (PKKPMSSYLR…VYKEAVSKYK (69 aa)) is a DNA-binding region (HMG box 1). Ser-54, Ser-55, and Ser-60 each carry phosphoserine; by PKA. Residue Lys-66 is modified to N6-succinyllysine. Thr-121 carries the phosphothreonine modification. Positions 154 to 218 (PKRPRSAYNI…RYDNEMKSWE (65 aa)) form a DNA-binding region, HMG box 2. Ser-159 bears the Phosphoserine; by PKA mark. Residue Ser-192 is modified to Phosphoserine. A disordered region spans residues 221–244 (MAEVGRSDLIRRSVKRPPGDISEN).

In terms of assembly, monomer; binds DNA as a monomer. Homodimer. Component of the mitochondrial transcription initiation complex, composed at least of TFB2M, TFAM and POLRMT. In this complex TFAM recruits POLRMT to the promoter whereas TFB2M induces structural changes in POLRMT to enable promoter opening and trapping of the DNA non-template strand. Upon metabolic stress, forms a complex composed of FOXO3, SIRT3, TFAM and POLRMT. Interacts with TFB1M and TFB2M. Interacts with CLPX; this enhances DNA-binding. In terms of processing, phosphorylation by PKA within the HMG box 1 impairs DNA binding and promotes degradation by the AAA+ Lon protease. As to expression, the mitochondrial isoform is widely expressed while the nuclear isoform is testis-specific.

The protein resides in the mitochondrion. It localises to the mitochondrion matrix. Its subcellular location is the mitochondrion nucleoid. The protein localises to the nucleus. Functionally, binds to the mitochondrial light strand promoter and functions in mitochondrial transcription regulation. Component of the mitochondrial transcription initiation complex, composed at least of TFB2M, TFAM and POLRMT that is required for basal transcription of mitochondrial DNA. In this complex, TFAM recruits POLRMT to a specific promoter whereas TFB2M induces structural changes in POLRMT to enable promoter opening and trapping of the DNA non-template strand. Required for accurate and efficient promoter recognition by the mitochondrial RNA polymerase. Promotes transcription initiation from the HSP1 and the light strand promoter by binding immediately upstream of transcriptional start sites. Is able to unwind DNA. Bends the mitochondrial light strand promoter DNA into a U-turn shape via its HMG boxes. Required for maintenance of normal levels of mitochondrial DNA. May play a role in organizing and compacting mitochondrial DNA. Its function is as follows. May also function as a transcriptional activator or may have a structural role in the compaction of nuclear DNA during spermatogenesis. This Rattus norvegicus (Rat) protein is Transcription factor A, mitochondrial.